The sequence spans 450 residues: UDP-N-acetylmuramoylalanine--D-glutamate ligase (450 aa).

111 to 117 (GTNGKST) provides a ligand contact to ATP.

Belongs to the MurCDEF family.

The protein resides in the cytoplasm. The enzyme catalyses UDP-N-acetyl-alpha-D-muramoyl-L-alanine + D-glutamate + ATP = UDP-N-acetyl-alpha-D-muramoyl-L-alanyl-D-glutamate + ADP + phosphate + H(+). It functions in the pathway cell wall biogenesis; peptidoglycan biosynthesis. Functionally, cell wall formation. Catalyzes the addition of glutamate to the nucleotide precursor UDP-N-acetylmuramoyl-L-alanine (UMA). This chain is UDP-N-acetylmuramoylalanine--D-glutamate ligase, found in Rickettsia bellii (strain RML369-C).